Here is a 217-residue protein sequence, read N- to C-terminus: TLD domain-containing protein 2 (217 aa).

A disordered region spans residues methionine 1–valine 48. Residues leucine 19–threonine 35 show a composition bias toward acidic residues. Residues glutamine 56–serine 217 form the TLDc domain.

The protein belongs to the OXR1 family.

The polypeptide is TLD domain-containing protein 2 (TLDC2) (Bos taurus (Bovine)).